The following is a 511-amino-acid chain: Histidine ammonia-lyase (511 aa).

The segment at residues 142-144 (ASG) is a cross-link (5-imidazolinone (Ala-Gly)). Ser-143 carries the post-translational modification 2,3-didehydroalanine (Ser).

The protein belongs to the PAL/histidase family. In terms of processing, contains an active site 4-methylidene-imidazol-5-one (MIO), which is formed autocatalytically by cyclization and dehydration of residues Ala-Ser-Gly.

It localises to the cytoplasm. It carries out the reaction L-histidine = trans-urocanate + NH4(+). Its pathway is amino-acid degradation; L-histidine degradation into L-glutamate; N-formimidoyl-L-glutamate from L-histidine: step 1/3. This is Histidine ammonia-lyase from Brucella suis biovar 1 (strain 1330).